The primary structure comprises 662 residues: Hypoxia-inducible factor 3-alpha (662 aa).

Residues 1–25 form a disordered region; sequence MDWDQDRSNTELRKEKSRDAARSRR. Residues 12 to 65 form the bHLH domain; it reads LRKEKSRDAARSRRSQETEVLYQLAHTLPFARGVSAHLDKASIMRLTISYLRMH. The segment at 75–98 is nuclear localization signal (isoform 2); sequence QVEKGGEPLDACYLKALEGFVMVL. 2 consecutive PAS domains span residues 80 to 150 and 225 to 295; these read GEPL…PNLS and PHPA…LSKG. A nuclear export signal (isoform 2) region spans residues 228–272; it reads ASLEPPLGRGAFLSRHSLDMKFTYCDERIAEVAGYSPDDLIGCSA. Disordered stretches follow at residues 352 to 377 and 416 to 446; these read EQTE…GNSV and PILD…DLPD. The LRRLL signature appears at 414-418; it reads MAPIL. The segment covering 426–437 has biased composition (low complexity); it reads TPSTPQATRRPQ. The interval 448 to 581 is ODD; the sequence is LTVGLENAHR…SEDKGLELLE (134 aa). An NTAD region spans residues 450–501; that stretch reads VGLENAHRLSTAQKNKTVETDLDIAQDPDTLDLEMLAPYISMDDDFQLNSSE. Lysine 463 is covalently cross-linked (Glycyl lysine isopeptide (Lys-Gly) (interchain with G-Cter in ubiquitin)). The short motif at 485–492 is the LAPYISMD element; it reads LAPYISMD. Proline 487 carries the 4-hydroxyproline modification. Residues 500-595 form a disordered region; the sequence is SEQLPKVHRR…KRSPRLEPGS (96 aa). Basic residues predominate over residues 505-521; that stretch reads KVHRRPPRVARRPRARS. Residue lysine 565 forms a Glycyl lysine isopeptide (Lys-Gly) (interchain with G-Cter in ubiquitin) linkage. Residues 572-584 show a composition bias toward basic and acidic residues; it reads SEDKGLELLETKP.

As to quaternary structure, isoform 1 interacts with ARNT. Isoform 2 interacts with HIF1A. Isoform 2 interacts EPAS1. Isoform 2 interacts (via C-terminus domain) with BAD; the interaction reduces the binding between BAD and BAX. Isoform 2 (via C-terminus domain) interacts with BCL2L2 and MCL1. Interacts with VHL. In terms of processing, in normoxia, hydroxylated on Pro-487 in the oxygen-dependent degradation domain (ODD) by PHD. The hydroxylated proline promotes interaction with VHL, initiating rapid ubiquitination and subsequent proteasomal degradation. Post-translationally, ubiquitinated; ubiquitination occurs in a VHL- and oxygen-dependent pathway and subsequently targeted for proteasomal degradation. As to expression, isoform 3 is expressed in endothelial cells of vessels and capillaries in alveoli of the neonatal lung (at protein level). Expressed in lung, brain, heart and kidney. Isoform 2 is expressed in heart and lung. Isoform 2 is highly expressed in the epithelial cell layer of the cornea with lower expression in the layers of ganglion cells, inner nuclear cells, and rods and cones of the retina. Isoform 2 is expressed in the cerebellum only in the Purkinje cell layer.

The protein resides in the nucleus. It is found in the cytoplasm. Its subcellular location is the nucleus speckle. It localises to the mitochondrion. In terms of biological role, acts as a transcriptional regulator in adaptive response to low oxygen tension. Acts as a regulator of hypoxia-inducible gene expression. Plays a role in the development of the cardiorespiratory system. Functionally, acts as a positive regulator of hypoxia-inducible gene expression. Associates to core DNA sequence 5'-TACGTG-3' within the hypoxia response element (HRE) of target gene promoters in a ARNT-dependent manner, and hence also participates in the transcriptional activation of reporter genes driven by HRE. Its function is as follows. Attenuates the ability of transcription factor HIF1A, EPAS1 and the HIF1A-ARNT complex to bind to hypoxia-responsive elements (HRE) located within the enhancer/promoter of hypoxia-inducible target genes and hence inhibits HRE-driven transcriptional activation. Functions as an inhibitor of angiogenesis in hypoxic cells of the cornea. May act as a tumor suppressor. May also be involved in apoptosis. Attenuates the ability of transcription factor HIF1A, EPAS1 and the HIF1A-ARNT complex to bind to hypoxia-responsive elements (HRE) located within the enhancer/promoter of hypoxia-inducible target genes and hence inhibits HRE-driven transcriptional activation. Also plays a role in the development of the lung and heart during embryonic and neonatal stages. This chain is Hypoxia-inducible factor 3-alpha, found in Mus musculus (Mouse).